A 274-amino-acid chain; its full sequence is Nitrogenase iron protein (274 aa).

8–15 (GKGGIGKS) serves as a coordination point for ATP. [4Fe-4S] cluster is bound at residue Cys94. Residue Arg97 is modified to ADP-ribosylarginine; by dinitrogenase reductase ADP-ribosyltransferase. Cys131 contacts [4Fe-4S] cluster.

Belongs to the NifH/BchL/ChlL family. In terms of assembly, homodimer. It depends on [4Fe-4S] cluster as a cofactor. Post-translationally, the reversible ADP-ribosylation of Arg-97 inactivates the nitrogenase reductase and regulates nitrogenase activity.

The catalysed reaction is N2 + 8 reduced [2Fe-2S]-[ferredoxin] + 16 ATP + 16 H2O = H2 + 8 oxidized [2Fe-2S]-[ferredoxin] + 2 NH4(+) + 16 ADP + 16 phosphate + 6 H(+). Its function is as follows. The key enzymatic reactions in nitrogen fixation are catalyzed by the nitrogenase complex, which has 2 components: the iron protein and the molybdenum-iron protein. The protein is Nitrogenase iron protein of Chlorobium phaeovibrioides (strain DSM 265 / 1930) (Prosthecochloris vibrioformis (strain DSM 265)).